The chain runs to 149 residues: Calmodulin-1 (149 aa).

Residue Ala2 is modified to N-acetylalanine. EF-hand domains lie at 8–43 (DQIS…LGQN), 44–79 (PTEA…KMKD), 81–116 (DSEE…LGEK), and 117–149 (LTDE…MMAK). Asp21, Asp23, Asp25, Cys27, Glu32, Asp57, Asp59, Asn61, Thr63, Glu68, Asp94, Asp96, Asn98, and Glu105 together coordinate Ca(2+). N6,N6,N6-trimethyllysine is present on Lys116. Ca(2+) is bound by residues Asp130, Asp132, Asp134, Gln136, and Glu141.

It belongs to the calmodulin family.

Functionally, calmodulin mediates the control of a large number of enzymes, ion channels and other proteins by Ca(2+). Among the enzymes to be stimulated by the calmodulin-Ca(2+) complex are a number of protein kinases and phosphatases. The sequence is that of Calmodulin-1 (CAM81) from Petunia hybrida (Petunia).